The following is a 696-amino-acid chain: Elongation factor G (696 aa).

Residues Asp8–Leu282 form the tr-type G domain. GTP is bound by residues Ala17–Thr24, Asp81–His85, and Asn135–Asp138.

This sequence belongs to the TRAFAC class translation factor GTPase superfamily. Classic translation factor GTPase family. EF-G/EF-2 subfamily.

The protein resides in the cytoplasm. Its function is as follows. Catalyzes the GTP-dependent ribosomal translocation step during translation elongation. During this step, the ribosome changes from the pre-translocational (PRE) to the post-translocational (POST) state as the newly formed A-site-bound peptidyl-tRNA and P-site-bound deacylated tRNA move to the P and E sites, respectively. Catalyzes the coordinated movement of the two tRNA molecules, the mRNA and conformational changes in the ribosome. The protein is Elongation factor G of Staphylococcus saprophyticus subsp. saprophyticus (strain ATCC 15305 / DSM 20229 / NCIMB 8711 / NCTC 7292 / S-41).